Here is a 161-residue protein sequence, read N- to C-terminus: Small ribosomal subunit protein uS9 (161 aa).

Disordered regions lie at residues 1–28 and 142–161; these read MAQI…PKAP and KERK…FSKR.

The protein belongs to the universal ribosomal protein uS9 family.

The chain is Small ribosomal subunit protein uS9 from Clavibacter sepedonicus (Clavibacter michiganensis subsp. sepedonicus).